The chain runs to 129 residues: Putative CC-type chemokine FPV061 (129 aa).

This sequence belongs to the intercrine beta (chemokine CC) family. Highly divergent.

The polypeptide is Putative CC-type chemokine FPV061 (Fowlpox virus (strain NVSL) (FPV)).